The chain runs to 407 residues: Protein arginine N-methyltransferase 2 (407 aa).

The RMT2 domain occupies 186–407 (TAADQATYLK…YYYHPEIRFA (222 aa)). Residues Tyr193, Met223, 246-251 (FGMGII), 267-269 (EAH), 294-295 (WQ), and Asp315 contribute to the S-adenosyl-L-methionine site.

Belongs to the class I-like SAM-binding methyltransferase superfamily. RMT2 methyltransferase family. In terms of assembly, monomer.

Its subcellular location is the cytoplasm. The protein localises to the nucleus. Its function is as follows. S-adenosyl-L-methionine-dependent protein-arginine N-methyltransferase that methylates the delta-nitrogen atom of arginine residues to form N5-methylarginine (type IV) in target proteins. Monomethylates ribosomal protein L12. This is Protein arginine N-methyltransferase 2 from Kluyveromyces lactis (strain ATCC 8585 / CBS 2359 / DSM 70799 / NBRC 1267 / NRRL Y-1140 / WM37) (Yeast).